The following is a 635-amino-acid chain: MDSAESPTKTQAGEDENYSLLCQAHEQFNNSEFDRCLELLQELETRGESSGPVLRHNRAVVSYYKTGCTQHSVLLKELEALTADADAPGDVSSGLSLKQGAAAATVARYNRAVIYYHRHMFGTALEKLAPLVARLEALEKAMAALVATLQLQLLLATNQLNRAEAFLDYLQYKLNLVATAPSSNAAEEAAVVGTAPPSAATNSSVVASPGGAAVEGAVPGLGGSLQLLQLITLVLNRKPVVIQEDGTPEYAALKAQQYYIMKDFQMAAKQLMRINNECTQAGTITPQLSTCIANNMGVIHLRVRHYAIAAKFFQNALNFDQQLARNLRQSTLQTMSSARSCEILYNLGVAMLHLRRPKEAFQCFLVPVKQFHSNPRLWLRMAEACIMEHEAKLVEEERQSQSETPSTKPYAPQSAGVPEPTLEFAVLCLRSALTLTQHYKTRFHMAAVSSEDVEAPEPKDPTQESWRHPQDNNFCNPSKPVSLESLENMMAAIYAAHSFVSLRLGDHVTALEMSEKLLACERLSDAHKLLGHMYAGEALMLMDKASEARDHLDPTFVGTLNAFDFETRDWQLKSVDAAQNVVRYNLAVAMALQNDLPQAKALLANLTHSLVANKALALRRFMDLKMGPVPGGTPS.

At threonine 45 the chain carries Phosphothreonine. Residues 131-165 (LVARLEALEKAMAALVATLQLQLLLATNQLNRAEA) adopt a coiled-coil conformation. 2 disordered regions span residues 396–416 (EERQSQSETPSTKPYAPQSAG) and 450–474 (SEDVEAPEPKDPTQESWRHPQDNNF). The span at 456–470 (PEPKDPTQESWRHPQ) shows a compositional bias: basic and acidic residues.

The protein belongs to the CNOT10 family. As to quaternary structure, component of the CCR4-NOT complex. CNOT10 and CNOT11 form a subcomplex docked to the CNOT1 scaffold.

It localises to the cytoplasm. Its subcellular location is the nucleus. Functionally, component of the CCR4-NOT complex which is one of the major cellular mRNA deadenylases and is linked to various cellular processes including bulk mRNA degradation, miRNA-mediated repression, translational repression during translational initiation and general transcription regulation. Additional complex functions may be a consequence of its influence on mRNA expression. Is not required for association of CNOT7 to the CCR4-NOT complex. This Drosophila melanogaster (Fruit fly) protein is CCR4-NOT transcription complex subunit 10 (Not10).